The chain runs to 505 residues: Aminoaldehyde dehydrogenase 2 (505 aa).

Na(+)-binding residues include Ile-31 and Asp-99. NAD(+) is bound by residues 159-161 (TPW) and 185-188 (KPSE). Leu-189 is a binding site for Na(+). 238–242 (GSGPT) is a binding site for NAD(+). The active-site Proton acceptor is the Glu-260. Residue Leu-261 participates in NAD(+) binding. Cys-295 serves as the catalytic Nucleophile. The NAD(+) site is built by Glu-394 and Trp-460.

Belongs to the aldehyde dehydrogenase family. As to quaternary structure, forms homodimers.

It carries out the reaction 4-aminobutanal + NAD(+) + H2O = 4-aminobutanoate + NADH + 2 H(+). It catalyses the reaction 3-aminopropanal + NAD(+) + H2O = beta-alanine + NADH + 2 H(+). The catalysed reaction is 4-(trimethylamino)butanal + NAD(+) + H2O = 4-(trimethylamino)butanoate + NADH + 2 H(+). The enzyme catalyses 4-guanidinobutanal + NAD(+) + H2O = 4-guanidinobutanoate + NADH + 2 H(+). It functions in the pathway amine and polyamine biosynthesis; betaine biosynthesis via choline pathway; betaine from betaine aldehyde: step 1/1. Functionally, dehydrogenase that catalyzes the oxidation of several aminoaldehydes. Metabolizes and detoxifies aldehyde products of polyamine degradation to non-toxic amino acids. Catalyzes the oxidation of 4-aminobutanal and 3-aminopropanal to 4-aminobutanoate and beta-alanine, respectively. Catalyzes the oxidation of 4-(trimethylamino)butanal and 4-guanidinobutanal to 4-trimethylammoniobutanoate and 4-guanidinobutanoate, respectively. The chain is Aminoaldehyde dehydrogenase 2 from Solanum lycopersicum (Tomato).